A 96-amino-acid chain; its full sequence is U-stichotoxin-Hau2b (96 aa).

A signal peptide spans 1–18 (MKPIFIVALLFSTCLVNA). Propeptides lie at residues 19–29 (KPSIDDAEMKR) and 30–33 (EPKP). 2 disulfides stabilise this stretch: cysteine 40–cysteine 51 and cysteine 43–cysteine 58. Propeptides lie at residues 62 to 64 (RKR) and 65 to 68 (EPKP). 2 disulfide bridges follow: cysteine 75/cysteine 86 and cysteine 78/cysteine 93.

Belongs to the sea anemone BBH family.

The protein localises to the secreted. It localises to the nematocyst. In terms of biological role, neurotoxin that paralyzes freshwater crabs at high concentration. This chain is U-stichotoxin-Hau2b, found in Heteractis aurora (Banded sea anemone).